Here is a 150-residue protein sequence, read N- to C-terminus: uncharacterized protein (150 aa).

This is an uncharacterized protein from Saccharomyces cerevisiae (strain ATCC 204508 / S288c) (Baker's yeast).